A 189-amino-acid polypeptide reads, in one-letter code: Glucose-6-phosphate isomerase (189 aa).

The Fe cation site is built by His-88, His-90, Glu-97, and His-136.

This sequence belongs to the archaeal-type GPI family. As to quaternary structure, homodimer.

The protein resides in the cytoplasm. The enzyme catalyses alpha-D-glucose 6-phosphate = beta-D-fructose 6-phosphate. It participates in carbohydrate degradation; glycolysis; D-glyceraldehyde 3-phosphate and glycerone phosphate from D-glucose: step 2/4. The chain is Glucose-6-phosphate isomerase from Thermococcus gammatolerans (strain DSM 15229 / JCM 11827 / EJ3).